A 379-amino-acid chain; its full sequence is Cathepsin B-like cysteine proteinase 6 (379 aa).

Positions 1 to 16 are cleaved as a signal peptide; that stretch reads MKTLLFLSCIVVAAYC. Positions 17–104 are excised as a propeptide; it reads ACNDNLESVL…LSKTKDLDLD (88 aa). Intrachain disulfides connect Cys-118–Cys-147, Cys-130–Cys-174, Cys-166–Cys-233, Cys-167–Cys-170, Cys-203–Cys-237, and Cys-211–Cys-223. Residue Cys-133 is part of the active site. An N-linked (GlcNAc...) asparagine glycan is attached at Asn-196. Asn-201 carries an N-linked (GlcNAc...) asparagine; atypical glycan. Active-site residues include His-305 and Asn-325.

Belongs to the peptidase C1 family.

This chain is Cathepsin B-like cysteine proteinase 6 (cpr-6), found in Caenorhabditis elegans.